We begin with the raw amino-acid sequence, 196 residues long: ATP-dependent Clp protease proteolytic subunit (196 aa).

The active-site Nucleophile is Ser98. His123 is a catalytic residue.

This sequence belongs to the peptidase S14 family. As to quaternary structure, fourteen ClpP subunits assemble into 2 heptameric rings which stack back to back to give a disk-like structure with a central cavity, resembling the structure of eukaryotic proteasomes.

The protein localises to the cytoplasm. The enzyme catalyses Hydrolysis of proteins to small peptides in the presence of ATP and magnesium. alpha-casein is the usual test substrate. In the absence of ATP, only oligopeptides shorter than five residues are hydrolyzed (such as succinyl-Leu-Tyr-|-NHMec, and Leu-Tyr-Leu-|-Tyr-Trp, in which cleavage of the -Tyr-|-Leu- and -Tyr-|-Trp bonds also occurs).. Its function is as follows. Cleaves peptides in various proteins in a process that requires ATP hydrolysis. Has a chymotrypsin-like activity. Plays a major role in the degradation of misfolded proteins. The chain is ATP-dependent Clp protease proteolytic subunit from Limosilactobacillus fermentum (strain NBRC 3956 / LMG 18251) (Lactobacillus fermentum).